The sequence spans 364 residues: Carbamoyl phosphate synthase pyrimidine-specific small chain (364 aa).

A CPSase region spans residues 1–169 (MKRYLVLEDG…AYPNPATGPN (169 aa)). L-glutamine-binding residues include serine 45, glycine 217, and glycine 219. Residues 169 to 356 (NVVVVDFGLK…IDLMAANQAT (188 aa)) enclose the Glutamine amidotransferase type-1 domain. Cysteine 244 functions as the Nucleophile in the catalytic mechanism. L-glutamine is bound by residues leucine 245, glutamine 248, asparagine 286, glycine 288, and tyrosine 289. Catalysis depends on residues histidine 329 and aspartate 331.

It belongs to the CarA family. Composed of two chains; the small (or glutamine) chain promotes the hydrolysis of glutamine to ammonia, which is used by the large (or ammonia) chain to synthesize carbamoyl phosphate. Tetramer of heterodimers (alpha,beta)4.

The catalysed reaction is hydrogencarbonate + L-glutamine + 2 ATP + H2O = carbamoyl phosphate + L-glutamate + 2 ADP + phosphate + 2 H(+). The enzyme catalyses L-glutamine + H2O = L-glutamate + NH4(+). It functions in the pathway pyrimidine metabolism; UMP biosynthesis via de novo pathway; (S)-dihydroorotate from bicarbonate: step 1/3. Inhibited by pyrimidine. Small subunit of the glutamine-dependent carbamoyl phosphate synthetase (CPSase). CPSase catalyzes the formation of carbamoyl phosphate from the ammonia moiety of glutamine, carbonate, and phosphate donated by ATP, constituting the first step of the biosynthetic pathway leading to pyrimidine nucleotides. The small subunit (glutamine amidotransferase) binds and cleaves glutamine to supply the large subunit with the substrate ammonia. This Lactiplantibacillus plantarum (strain ATCC BAA-793 / NCIMB 8826 / WCFS1) (Lactobacillus plantarum) protein is Carbamoyl phosphate synthase pyrimidine-specific small chain.